The following is an 896-amino-acid chain: Putative mannosylglycerate hydrolase (896 aa).

Residues histidine 12, aspartate 14, aspartate 125, and histidine 348 each contribute to the a divalent metal cation site. Residue aspartate 125 is the Nucleophile of the active site.

Belongs to the glycosyl hydrolase 38 family. A divalent metal cation serves as cofactor.

It catalyses the reaction (2R)-2-O-(6-phospho-alpha-D-mannosyl)-glycerate + H2O = alpha-D-mannose 6-phosphate + (R)-glycerate. May hydrolyze 6-phospho-mannosyl-D-glycerate to mannose-6-phosphate and glycerate. This Halalkalibacterium halodurans (strain ATCC BAA-125 / DSM 18197 / FERM 7344 / JCM 9153 / C-125) (Bacillus halodurans) protein is Putative mannosylglycerate hydrolase (mngB).